Consider the following 298-residue polypeptide: GTP-binding protein REM 1 (298 aa).

A disordered region spans residues 1 to 73 (MTLNTEQEAK…DDWSSESSDS (73 aa)). Residues 35–55 (TVPSTQSQHPRLGQSASLNPP) show a composition bias toward polar residues. Phosphoserine is present on Ser51. A compositionally biased stretch (low complexity) spans 63–73 (PDDWSSESSDS). GTP contacts are provided by residues 87-94 (GDPGVGKT) and 195-198 (NKAD). The segment at 268–287 (ARRFLARLTARSARRRALKA) is calmodulin-binding.

It belongs to the small GTPase superfamily. RGK family. As to quaternary structure, in vitro, interacts with calmodulin in a calcium-dependent manner. As to expression, most highly expressed in the endothelial lining of the blood vessels in uterus and heart. Lower levels found in spleen, lymph node, kidney and testis. Also found in cells with secretory function such as the islets of Langerhans, lobule/duct epithelium in the breast, bile duct epithelium in the liver, surface epithelium in the endometrial glands of the uterus, colon mucosa and acinar cells in the pancreas and the prostate.

Its function is as follows. Promotes endothelial cell sprouting and actin cytoskeletal reorganization. May be involved in angiogenesis. May function in Ca(2+) signaling. This chain is GTP-binding protein REM 1 (REM1), found in Homo sapiens (Human).